The primary structure comprises 144 residues: Large ribosomal subunit protein uL15 (144 aa).

The disordered stretch occupies residues 1-57 (MKLNDLSPAPGSRREKHRPGRGIGSGLGKTGGRGHKGQTSRSGGTIAPGFEGGQQPL). Gly residues predominate over residues 21 to 31 (RGIGSGLGKTG).

The protein belongs to the universal ribosomal protein uL15 family. In terms of assembly, part of the 50S ribosomal subunit.

In terms of biological role, binds to the 23S rRNA. This is Large ribosomal subunit protein uL15 from Pseudomonas fluorescens (strain ATCC BAA-477 / NRRL B-23932 / Pf-5).